Reading from the N-terminus, the 419-residue chain is eIF5-mimic protein 1 (419 aa).

Residues 1–22 form a disordered region; that stretch reads MNKHQKPVLTGQRFKTRKRDEK. Lys-117 is subject to N6-acetyllysine. The W2 domain occupies 248–415; the sequence is VQQSLGTRKE…QNAEEESESE (168 aa). Phosphoserine occurs at positions 412, 414, and 419.

The protein belongs to the BZW family. As to quaternary structure, interacts with EIF3E, EIF2S2 and EIF3C.

Its subcellular location is the cytoplasm. In terms of biological role, translation initiation regulator which represses non-AUG initiated translation and repeat-associated non-AUG (RAN) initiated translation by acting as a competitive inhibitor of eukaryotic translation initiation factor 5 (EIF5) function. Increases the accuracy of translation initiation by impeding EIF5-dependent translation from non-AUG codons by competing with it for interaction with EIF2S2 within the 43S pre-initiation complex (PIC) in an EIF3C-binding dependent manner. The protein is eIF5-mimic protein 1 (Bzw2) of Mus musculus (Mouse).